Here is a 385-residue protein sequence, read N- to C-terminus: Meiotic recombination protein SPO11-2 (385 aa).

In terms of domain architecture, Topo IIA-type catalytic spans 24 to 169 (LPPAEVRARI…LGIMASSRGA (146 aa)). The O-(5'-phospho-DNA)-tyrosine intermediate role is filled by Tyr126. Residues Glu219 and Asp272 each coordinate Mg(2+).

It belongs to the TOP6A family. In terms of assembly, interacts with TOP6B. Requires Mg(2+) as cofactor.

Its subcellular location is the nucleus. The enzyme catalyses ATP-dependent breakage, passage and rejoining of double-stranded DNA.. In terms of biological role, required for meiotic recombination. Mediates DNA cleavage that forms the double-strand breaks (DSB) that initiate meiotic recombination. In Oryza sativa subsp. japonica (Rice), this protein is Meiotic recombination protein SPO11-2 (SPO11-2).